Here is a 435-residue protein sequence, read N- to C-terminus: MTLPRQCAAACRTGGGGGGVVRCRAVAAAGGAVAVRDAVVAPVARRGAARKTAETVAGMWREVQGCGDWEGMLEPAPHPVLRGEVARYGELVGACYKAFDLDPASRRYLNCKYGRERMLEEVGMGGAGYEVTRYIYAAADVSVPTMEPSTSGRGRWIGYVAVSTDEMSRRLGRRDVLVSFRGTVTPAEWMANLMSSLEAARLDPCDPRPDVKVESGFLSLYTSADKTCRFGGAGSCREQLLREVSRLVAAYSGGGEDVSVTLAGHSMGSALALLSAYDLAELGLNRAAPVTVFSFGGPRVGNAAFKARCDELGVKALRVTNVHDPITKLPGVFLNEATAGVLRPWRHSCYTHVGVELPLDFFKVGDLASVHDLATYISLLRGADKKQPAAAAADAGGVLAKVMDFVGRRRGGGALPWHDAAMIQMGGLVQTLGLI.

A chloroplast and mitochondrion-targeting transit peptide spans 1–31 (MTLPRQCAAACRTGGGGGGVVRCRAVAAAGG). The GXSXG signature appears at 264-268 (GHSMG). The active-site Acyl-ester intermediate is the Ser266. Catalysis depends on charge relay system residues Asp324 and His371.

Belongs to the AB hydrolase superfamily. Lipase family.

It localises to the mitochondrion. Its subcellular location is the plastid. The protein localises to the chloroplast. The catalysed reaction is a 1,2-diacyl-sn-glycero-3-phosphocholine + H2O = a 2-acyl-sn-glycero-3-phosphocholine + a fatty acid + H(+). Functionally, phospholipase that releases free fatty acids from phospholipids. Catalyzes the initial step of jasmonate (JA) biosynthesis. Required for the biosynthesis of endogenous JA in seedling, inflorescence and spikelets. Not essential for JA biosynthesis after wounding. Mediates spikelet development and specification of empty-glume identity. Functions in a high temperature-dependent manner to maintain floral developmental robustness under heat stress conditions. Functions by safeguarding the expression of several floral identity genes, such as MADS1, MADS6 and G1. In Oryza sativa subsp. indica (Rice), this protein is Phospholipase A1 EG1, chloroplastic/mitochondrial.